A 339-amino-acid chain; its full sequence is Anthranilate phosphoribosyltransferase (339 aa).

Residues G80, G83 to D84, T88, N90 to T93, K108 to S116, and S120 each bind 5-phospho-alpha-D-ribose 1-diphosphate. G80 serves as a coordination point for anthranilate. Residue S92 participates in Mg(2+) binding. N111 provides a ligand contact to anthranilate. R166 contacts anthranilate. Residues D225 and E226 each contribute to the Mg(2+) site.

This sequence belongs to the anthranilate phosphoribosyltransferase family. Homodimer. The cofactor is Mg(2+).

It carries out the reaction N-(5-phospho-beta-D-ribosyl)anthranilate + diphosphate = 5-phospho-alpha-D-ribose 1-diphosphate + anthranilate. The protein operates within amino-acid biosynthesis; L-tryptophan biosynthesis; L-tryptophan from chorismate: step 2/5. Functionally, catalyzes the transfer of the phosphoribosyl group of 5-phosphorylribose-1-pyrophosphate (PRPP) to anthranilate to yield N-(5'-phosphoribosyl)-anthranilate (PRA). The sequence is that of Anthranilate phosphoribosyltransferase from Caldanaerobacter subterraneus subsp. tengcongensis (strain DSM 15242 / JCM 11007 / NBRC 100824 / MB4) (Thermoanaerobacter tengcongensis).